The chain runs to 211 residues: Ribosomal RNA small subunit methyltransferase G (211 aa).

Residues Gly-78, Met-83, 129–130, and Arg-144 each bind S-adenosyl-L-methionine; that span reads AE.

Belongs to the methyltransferase superfamily. RNA methyltransferase RsmG family.

It localises to the cytoplasm. It carries out the reaction guanosine(527) in 16S rRNA + S-adenosyl-L-methionine = N(7)-methylguanosine(527) in 16S rRNA + S-adenosyl-L-homocysteine. In terms of biological role, specifically methylates the N7 position of guanine in position 527 of 16S rRNA. The sequence is that of Ribosomal RNA small subunit methyltransferase G from Pseudomonas syringae pv. tomato (strain ATCC BAA-871 / DC3000).